We begin with the raw amino-acid sequence, 485 residues long: MDNVDKTMKSEISEEDPEQLFRVLEVIGQGSFGVVCTCINTVNNEVVAIKFLEMEGEENSSLKKEITILKNTVRCPYIVKYHGCYIKENNLMIVMEYCDGGSILDIMQMCSITLTEAQIAAILYQIVEGLVYLHSNKILHRDIKAGNVLVNKLGQAKLADFGVSAILVNTGFKQKTVVGSPYWMSPEVISPPKGSNGYDSKADIWSLGITAIEMAESKPPLFNLNPVKVIFVIPFRQAPTLEVPGNWSPEFNDFISVCLNKEADKRPSAVDLLNHPFIKKGKEHSQPTISEMVEQCIPTMKEYRRKKAEEEEAEEAEEGDDYDDVNGGGDERQHGSSVSSAGLQKGTLLKINTITQRATVMREDGTEDTSNNGGTFIYNNNNNNSSKTSSSGTVVFSKNGSIIKNDDDDDDDIEEGGFDSGSVVFKGSTLVEKFESMKLKYNKRRQQQESSDEEDEEDEDDEDDEEGGFDSGSVVYTKSPVNQDD.

The 258-residue stretch at 21 to 278 (FRVLEVIGQG…AVDLLNHPFI (258 aa)) folds into the Protein kinase domain. ATP is bound by residues 27 to 35 (IGQGSFGVV) and lysine 50. The Proton acceptor role is filled by aspartate 142. Disordered stretches follow at residues 304–343 (RRKKAEEEEAEEAEEGDDYDDVNGGGDERQHGSSVSSAGL), 360–424 (VMRE…GSVV), and 436–485 (SMKL…NQDD). Positions 310–324 (EEEAEEAEEGDDYDD) are enriched in acidic residues. The span at 370–393 (SNNGGTFIYNNNNNNSSKTSSSGT) shows a compositional bias: low complexity. Acidic residues-rich tracts occupy residues 406–417 (DDDDDDDIEEGG) and 450–468 (SSDEEDEEDEDDEDDEEGG). The span at 474–485 (VVYTKSPVNQDD) shows a compositional bias: polar residues.

It belongs to the protein kinase superfamily. STE Ser/Thr protein kinase family. STE20 subfamily. Mg(2+) serves as cofactor.

It carries out the reaction L-seryl-[protein] + ATP = O-phospho-L-seryl-[protein] + ADP + H(+). The catalysed reaction is L-threonyl-[protein] + ATP = O-phospho-L-threonyl-[protein] + ADP + H(+). The protein is Serine/threonine-protein kinase dst4 of Dictyostelium discoideum (Social amoeba).